The chain runs to 521 residues: Glutamyl-tRNA(Gln) amidotransferase subunit A, mitochondrial (521 aa).

Catalysis depends on charge relay system residues K61 and S139. The active-site Acyl-ester intermediate is S163.

It belongs to the amidase family. GatA subfamily. In terms of assembly, subunit of the heterotrimeric GatCAB amidotransferase (AdT) complex, composed of A, B and C subunits.

It is found in the mitochondrion. It catalyses the reaction L-glutamyl-tRNA(Gln) + L-glutamine + ATP + H2O = L-glutaminyl-tRNA(Gln) + L-glutamate + ADP + phosphate + H(+). In terms of biological role, allows the formation of correctly charged Gln-tRNA(Gln) through the transamidation of misacylated Glu-tRNA(Gln) in the mitochondria. The reaction takes place in the presence of glutamine and ATP through an activated gamma-phospho-Glu-tRNA(Gln). This Ajellomyces capsulatus (strain G186AR / H82 / ATCC MYA-2454 / RMSCC 2432) (Darling's disease fungus) protein is Glutamyl-tRNA(Gln) amidotransferase subunit A, mitochondrial.